A 402-amino-acid chain; its full sequence is NAD-dependent protein deacetylase sirtuin-7 (402 aa).

A disordered region spans residues 1–23; it reads MAAGGGLSRSERKAAERVRRLRE. Over residues 9–23 the composition is skewed to basic and acidic residues; the sequence is RSERKAAERVRRLRE. One can recognise a Deacetylase sirtuin-type domain in the interval 83 to 330; it reads PEELRRKVRE…QLLMNELGLE (248 aa). Residues 108–127 and 168–171 each bind NAD(+); these read GAGI…NGVW and QNCD. The Proton acceptor role is filled by histidine 188. Residues cysteine 196, cysteine 199, cysteine 226, and cysteine 229 each coordinate Zn(2+). NAD(+) contacts are provided by residues 269–271, 298–300, and cysteine 316; these read GSS and NLQ. The interval 355–402 is disordered; the sequence is SHSRKSLCRSREEAPPGDQSDPLASAPPILGGWFGRGCAKRAKRKKVA. Residue arginine 390 is modified to Asymmetric dimethylarginine; alternate. Arginine 390 is subject to Omega-N-methylarginine; alternate. A compositionally biased stretch (basic residues) spans 392–402; the sequence is CAKRAKRKKVA.

This sequence belongs to the sirtuin family. Class IV subfamily. Interacts with UBTF and the RNA polymerase I complex. Interacts with components of the B-WICH complex, such as MYBBP1A, SMARCA5/SNF2H and BAZ1B/WSTF. Interacts with ELK4, leading to stabilization at target promoters for H3K18Ac deacetylation. Interacts with histone H2A and/or histone H2B. Interacts with DNMT1. Interacts with SIRT1. Zn(2+) serves as cofactor. Post-translationally, phosphorylated during mitosis. In terms of processing, methylation at Arg-390 by PRMT6 inhibits the H3K18Ac histone deacetylase activity, promoting mitochondria biogenesis and maintaining mitochondria respiration. Ubiquitinated via 'Lys-63'-linked ubiquitin chains. Deubiquitinated by USP7, inhibiting the H3K18Ac histone deacetylase activity and regulating gluconeogenesis. Ubiquitinated by E3 ubiquitin-protein ligase complex containing FBXO7; leading to proteasomal degradation. As to expression, detected in liver, spleen and testis. Detected in embryos.

It localises to the nucleus. It is found in the nucleolus. The protein localises to the nucleoplasm. The protein resides in the chromosome. Its subcellular location is the cytoplasm. It catalyses the reaction N(6)-acetyl-L-lysyl-[protein] + NAD(+) + H2O = 2''-O-acetyl-ADP-D-ribose + nicotinamide + L-lysyl-[protein]. The enzyme catalyses N(6)-glutaryl-L-lysyl-[protein] + NAD(+) + H2O = 2''-O-glutaryl-ADP-D-ribose + nicotinamide + L-lysyl-[protein]. It carries out the reaction N(6)-succinyl-L-lysyl-[protein] + NAD(+) + H2O = 2''-O-succinyl-ADP-D-ribose + nicotinamide + L-lysyl-[protein]. The catalysed reaction is N(6)-propanoyl-L-lysyl-[protein] + NAD(+) + H2O = 3''-O-propanoyl-ADP-D-ribose + nicotinamide + L-lysyl-[protein]. It catalyses the reaction N(6)-decanoyl-L-lysyl-[protein] + NAD(+) + H2O = 2''-O-decanoyl-ADP-D-ribose + nicotinamide + L-lysyl-[protein]. NAD-dependent protein-lysine deacetylase and deacylase activities are activated by nucleic acids. Histone deacetylase activity is activated by DNA. Protein-lysine deacylase activity is activated by RNA. H3K18Ac histone deacetylase activity is inhibited by methylation at Arg-390. H3K18Ac histone deacetylase activity is inhibited by deubiquitination by USP7. In terms of biological role, NAD-dependent protein-lysine deacylase that can act both as a deacetylase or deacylase (desuccinylase, depropionylase and deglutarylase), depending on the context. Also acts as a dedecanoylase. Specifically mediates deacetylation of histone H3 at 'Lys-18' (H3K18Ac). In contrast to other histone deacetylases, displays strong preference for a specific histone mark, H3K18Ac, directly linked to control of gene expression. H3K18Ac is mainly present around the transcription start site of genes and has been linked to activation of nuclear hormone receptors; SIRT7 thereby acts as a transcription repressor. Moreover, H3K18 hypoacetylation has been reported as a marker of malignancy in various cancers and seems to maintain the transformed phenotype of cancer cells. Also able to mediate deacetylation of histone H3 at 'Lys-36' (H3K36Ac) in the context of nucleosomes. Also mediates deacetylation of non-histone proteins, such as ATM, CDK9, DDX21, DDB1, FBL, FKBP5/FKBP51, GABPB1, RAN, RRP9/U3-55K and POLR1E/PAF53. Enriched in nucleolus where it stimulates transcription activity of the RNA polymerase I complex. Acts by mediating the deacetylation of the RNA polymerase I subunit POLR1E/PAF53, thereby promoting the association of RNA polymerase I with the rDNA promoter region and coding region. In response to metabolic stress, SIRT7 is released from nucleoli leading to hyperacetylation of POLR1E/PAF53 and decreased RNA polymerase I transcription. Required to restore the transcription of ribosomal RNA (rRNA) at the exit from mitosis. Promotes pre-ribosomal RNA (pre-rRNA) cleavage at the 5'-terminal processing site by mediating deacetylation of RRP9/U3-55K, a core subunit of the U3 snoRNP complex. Mediates 'Lys-37' deacetylation of Ran, thereby regulating the nuclear export of NF-kappa-B subunit RELA/p65. Acts as a regulator of DNA damage repair by mediating deacetylation of ATM during the late stages of DNA damage response, promoting ATM dephosphorylation and deactivation. May also deacetylate p53/TP53 and promotes cell survival, however such data need additional confirmation. Suppresses the activity of the DCX (DDB1-CUL4-X-box) E3 ubiquitin-protein ligase complexes by mediating deacetylation of DDB1, which prevents the interaction between DDB1 and CUL4 (CUL4A or CUL4B). Activates RNA polymerase II transcription by mediating deacetylation of CDK9, thereby promoting 'Ser-2' phosphorylation of the C-terminal domain (CTD) of RNA polymerase II. Deacetylates FBL, promoting histone-glutamine methyltransferase activity of FBL. Acts as a regulator of mitochondrial function by catalyzing deacetylation of GABPB1. Regulates Akt/AKT1 activity by mediating deacetylation of FKBP5/FKBP51. Required to prevent R-loop-associated DNA damage and transcription-associated genomic instability by mediating deacetylation and subsequent activation of DDX21, thereby overcoming R-loop-mediated stalling of RNA polymerases. In addition to protein deacetylase activity, also acts as protein-lysine deacylase. Acts as a protein depropionylase by mediating depropionylation of Osterix (SP7), thereby regulating bone formation by osteoblasts. Acts as a histone deglutarylase by mediating deglutarylation of histone H4 on 'Lys-91' (H4K91glu); a mark that destabilizes nucleosomes by promoting dissociation of the H2A-H2B dimers from nucleosomes. Acts as a histone desuccinylase: in response to DNA damage, recruited to DNA double-strand breaks (DSBs) and catalyzes desuccinylation of histone H3 on 'Lys-122' (H3K122succ), thereby promoting chromatin condensation and DSB repair. Also promotes DSB repair by promoting H3K18Ac deacetylation, regulating non-homologous end joining (NHEJ). Along with its role in DNA repair, required for chromosome synapsis during prophase I of female meiosis by catalyzing H3K18Ac deacetylation. Involved in transcriptional repression of LINE-1 retrotransposon via H3K18Ac deacetylation, and promotes their association with the nuclear lamina. Required to stabilize ribosomal DNA (rDNA) heterochromatin and prevent cellular senescence induced by rDNA instability. Acts as a negative regulator of SIRT1 by preventing autodeacetylation of SIRT1, restricting SIRT1 deacetylase activity. The polypeptide is NAD-dependent protein deacetylase sirtuin-7 (Mus musculus (Mouse)).